Consider the following 423-residue polypeptide: tRNA(Ile2) 2-agmatinylcytidine synthetase TiaS (423 aa).

The segment at residues 273–347 (VIVYGRVVEE…GINIEKIKIL (75 aa)) is a DNA-binding region (OB).

It belongs to the TiaS family.

It localises to the cytoplasm. It carries out the reaction cytidine(34) in tRNA(Ile2) + agmatine + ATP + H2O = 2-agmatinylcytidine(34) in tRNA(Ile2) + AMP + 2 phosphate + 2 H(+). Its function is as follows. ATP-dependent agmatine transferase that catalyzes the formation of 2-agmatinylcytidine (agm2C) at the wobble position (C34) of tRNA(Ile2), converting the codon specificity from AUG to AUA. This Methanocaldococcus jannaschii (strain ATCC 43067 / DSM 2661 / JAL-1 / JCM 10045 / NBRC 100440) (Methanococcus jannaschii) protein is tRNA(Ile2) 2-agmatinylcytidine synthetase TiaS.